We begin with the raw amino-acid sequence, 329 residues long: MQGSVTEFLKPRLVDIEQVSSTHAKVTLEPLERGFGHTLGNALRRILLSSMPGCAVTEVEIDGVLHEYSTKEGVQEDILEILLNLKGLAVRVQGKDEVILTLNKSGIGPVTAADIIHDGDVEIVKPQHVICHLTDETASISMRIKVQRGRGYVPASARIHSEEDERPIGRLLVDACYSPVERIAYNVEAARVEQRTDLDKLVIEMETNGTIDPEEAIRRAATILAEQLEAFVDLRDVRQPEVKEEKPEFDPILLRPVDDLELTVRSANCLKAEAIHYIGDLVQRTEVELLKTPNLGKKSLTEIKDVLASRGLSLGMRLENWPPASIADE.

The alpha N-terminal domain (alpha-NTD) stretch occupies residues M1–R235. The tract at residues F249–E329 is alpha C-terminal domain (alpha-CTD).

It belongs to the RNA polymerase alpha chain family. As to quaternary structure, homodimer. The RNAP catalytic core consists of 2 alpha, 1 beta, 1 beta' and 1 omega subunit. When a sigma factor is associated with the core the holoenzyme is formed, which can initiate transcription.

It catalyses the reaction RNA(n) + a ribonucleoside 5'-triphosphate = RNA(n+1) + diphosphate. Functionally, DNA-dependent RNA polymerase catalyzes the transcription of DNA into RNA using the four ribonucleoside triphosphates as substrates. This is DNA-directed RNA polymerase subunit alpha from Photorhabdus laumondii subsp. laumondii (strain DSM 15139 / CIP 105565 / TT01) (Photorhabdus luminescens subsp. laumondii).